Consider the following 233-residue polypeptide: Esterase FUS5 (233 aa).

Residues Ser105, Asp159, and His187 each act as charge relay system in the active site.

It belongs to the LovG family.

In terms of biological role, esterase; part of the gene cluster that mediates the biosynthesis of the mycotoxin fusarin C. Within the cluster, FUS1, FUS2, FUS8 and FUS9 are sufficient for fusarin production. The other FUS cluster members are not essential for fusarin C biosynthesis. This Gibberella moniliformis (strain M3125 / FGSC 7600) (Maize ear and stalk rot fungus) protein is Esterase FUS5.